The following is a 1088-amino-acid chain: Leucine-rich repeat receptor-like protein kinase PEPR2 (1088 aa).

The first 26 residues, 1–26, serve as a signal peptide directing secretion; the sequence is MRNLGLLEITLLCSLFVYFRIDSVSS. Topologically, residues 27–739 are extracellular; sequence LNSDGLALLS…QVKLSTWKIA (713 aa). Residues Asn-55, Asn-82, and Asn-122 are each glycosylated (N-linked (GlcNAc...) asparagine). LRR repeat units follow at residues 75–99, 100–122, 123–146, 147–170, 172–194, 195–219, 221–243, 244–267, 269–291, 292–315, 316–339, 341–363, 365–387, 388–411, 412–435, 436–459, 460–485, 487–506, 507–529, 530–554, 556–577, 578–602, 603–627, 629–651, 652–676, and 678–698; these read GNVV…IGEL, KSLV…TLGN, CTSL…IFGS, LQNL…SVGG, IELV…LLGN, CSKL…LYLL, NLGE…SSNC, KKLV…IGNC, SLHS…MGML, RKVS…LGNC, SSLE…LSKL, KLQS…IWKI, SLTQ…VTQL, KHLK…LGLN, RSLE…LCHG, QKLR…IRQC, KTLE…SLSL, YVNL…LGSC, KNLL…ELGN, LQSL…LSGC, RLLY…SFRS, WKSL…LAEL, DRLS…GLLK, LRYG…LGAL, INLE…SLKS, and NQVD…LLSN. 9 N-linked (GlcNAc...) asparagine glycosylation sites follow: Asn-149, Asn-159, Asn-183, Asn-194, Asn-209, Asn-229, Asn-266, Asn-279, and Asn-314. 2 N-linked (GlcNAc...) asparagine glycosylation sites follow: Asn-373 and Asn-411. Residues Asn-537 and Asn-568 are each glycosylated (N-linked (GlcNAc...) asparagine). 2 N-linked (GlcNAc...) asparagine glycosylation sites follow: Asn-658 and Asn-698. Residues 740–760 traverse the membrane as a helical segment; it reads LIAAGSSLSVLALLFALFLVL. Residues 761-1088 lie on the Cytoplasmic side of the membrane; that stretch reads CRCKRGTKTE…FVRSTSGSVH (328 aa). Residue Thr-791 is modified to Phosphothreonine. The Protein kinase domain maps to 794-1080; sequence LDDKYIIGRG…KDLTDLESFV (287 aa). ATP-binding positions include 800-808 and Lys-822; that span reads IGRGAHGVV. A phosphotyrosine mark is found at Tyr-868 and Tyr-908. The active-site Proton acceptor is Asp-921. Phosphotyrosine is present on residues Tyr-962 and Tyr-969.

It belongs to the protein kinase superfamily. Ser/Thr protein kinase family. Interacts with BAK1. Interacts with CLE14.

The protein localises to the cell membrane. The catalysed reaction is L-seryl-[protein] + ATP = O-phospho-L-seryl-[protein] + ADP + H(+). The enzyme catalyses L-threonyl-[protein] + ATP = O-phospho-L-threonyl-[protein] + ADP + H(+). In terms of biological role, acts as a receptor for PEP defense peptides. Unlike typical immune receptors, senses an endogenous elicitor that potentiates PAMP-inducible plant responses. The protein is Leucine-rich repeat receptor-like protein kinase PEPR2 (PEPR2) of Arabidopsis thaliana (Mouse-ear cress).